We begin with the raw amino-acid sequence, 128 residues long: LIM domain-containing protein 2 (128 aa).

M1 is subject to N-acetylmethionine. The tract at residues 1-25 is disordered; that stretch reads MFQAAGAAQATPSHEAKGSSGNSTV. The LIM zinc-binding domain maps to 39–99; it reads ETCAACQKTV…KPHFQQLFKS (61 aa). Residues C41, C44, H62, C65, C68, C71, C89, and H92 each contribute to the Zn(2+) site.

As to quaternary structure, interacts with ILK.

Its subcellular location is the cytoplasm. The protein localises to the nucleus. Acts as an activator of the protein-kinase ILK, thereby regulating cell motility. This is LIM domain-containing protein 2 (Limd2) from Rattus norvegicus (Rat).